We begin with the raw amino-acid sequence, 624 residues long: LRR receptor kinase BAK1 (624 aa).

A signal peptide spans 1-25 (MAAHRWAVWAVLLLRLLVPAARVLA). Residues 26–237 (NMEGDALHSL…QSPGSSSSTG (212 aa)) lie on the Extracellular side of the membrane. LRR repeat units lie at residues 91-115 (LKNL…LGNL), 117-139 (NLVS…LGNL), 140-163 (LKLR…LTAI), and 164-188 (TALQ…SFSL). 5 N-linked (GlcNAc...) asparagine glycosylation sites follow: asparagine 103, asparagine 114, asparagine 127, asparagine 149, and asparagine 175. Residues 205 to 236 (TTKPCPGAPPFSPPPPYNPPTPVQSPGSSSST) are disordered. Residues 210-227 (PGAPPFSPPPPYNPPTPV) are compositionally biased toward pro residues. Residues 238 to 258 (AIAGGVAAGAALLFAIPAIGF) traverse the membrane as a helical segment. Over 259 to 624 (AWYRRRKPQE…LHAVELSGPR (366 aa)) the chain is Cytoplasmic. The Protein kinase domain occupies 301–588 (FSNKNILGRG…GLAERWEEWQ (288 aa)). Residues 307-315 (LGRGGFGKV) and lysine 329 contribute to the ATP site. The active-site Proton acceptor is aspartate 428.

This sequence belongs to the protein kinase superfamily. Ser/Thr protein kinase family. As to quaternary structure, forms homodimers. Interacts with BRI1. Interacts with REM4.1. In terms of tissue distribution, expressed in developing lateral roots, shoot apex, leaf blades, lamina joints and flowers. Expressed at low levels in leaf sheaths and panicles.

The protein resides in the cell membrane. The catalysed reaction is L-seryl-[protein] + ATP = O-phospho-L-seryl-[protein] + ADP + H(+). The enzyme catalyses L-threonyl-[protein] + ATP = O-phospho-L-threonyl-[protein] + ADP + H(+). In terms of biological role, LRR receptor kinase involved in defense response. Does not seem to be required specifically for XA21-mediated immunity or basal resistance to Xanthomonas oryzae pv. oryzae (Xoo), or immunity to Magnaporthe oryzae. Involved in brassinosteroid (BR) signaling pathway. Acts as a coreceptor of BRI1. Forms at the plasma membrane a receptor complex with BRI1 which is activated in response to brassinolide. Phosphorylates BRI1. Required for normal plant growth and leaf development. Possesses kinase activity in vitro. In Oryza sativa subsp. japonica (Rice), this protein is LRR receptor kinase BAK1.